We begin with the raw amino-acid sequence, 134 residues long: Small ribosomal subunit protein uS8 (134 aa).

This sequence belongs to the universal ribosomal protein uS8 family. In terms of assembly, part of the 30S ribosomal subunit. Contacts proteins S5 and S12.

One of the primary rRNA binding proteins, it binds directly to 16S rRNA central domain where it helps coordinate assembly of the platform of the 30S subunit. In Petrotoga mobilis (strain DSM 10674 / SJ95), this protein is Small ribosomal subunit protein uS8.